A 122-amino-acid polypeptide reads, in one-letter code: Large ribosomal subunit protein uL18 (122 aa).

The segment covering 1–19 (MSKLSRKQQTQKRHKRLRR) has biased composition (basic residues). The segment at 1–27 (MSKLSRKQQTQKRHKRLRRNLSGTESR) is disordered.

The protein belongs to the universal ribosomal protein uL18 family. Part of the 50S ribosomal subunit; part of the 5S rRNA/L5/L18/L25 subcomplex. Contacts the 5S and 23S rRNAs.

Its function is as follows. This is one of the proteins that bind and probably mediate the attachment of the 5S RNA into the large ribosomal subunit, where it forms part of the central protuberance. The protein is Large ribosomal subunit protein uL18 of Prochlorococcus marinus (strain NATL1A).